A 426-amino-acid chain; its full sequence is Crinkler effector protein 4 (426 aa).

The interval 20-57 (VEIDDSAKVSKLKKVIKEENPATITCDAKDLQLFLAKK) is LQLFLAK domain. Positions 59 to 107 (DAWLDGAGAAAVELDEHGHPQGCVQMDPTLWVKNPKHFGDNFQPGEGQV) are DWL domain. The short motif at 108-114 (HVLVVVP) is the HVLVXXP motif element. An effector domain region spans residues 115–426 (EGVVGSASET…RSIPTLSYFS (312 aa)).

This sequence belongs to the Crinkler effector family.

Its subcellular location is the secreted. It localises to the host nucleus. In terms of biological role, secreted effector that is critical to pathogenesis by suppressing plant immune responsess. Promotes Phytophthora infection by suppressing the H(2)O(2) accumulation and callose deposition. May induce cell death by regulating expression of cell death-related genes. This is Crinkler effector protein 4 from Phytophthora capsici.